The following is a 421-amino-acid chain: Histidine--tRNA ligase (421 aa).

Belongs to the class-II aminoacyl-tRNA synthetase family. As to quaternary structure, homodimer.

It localises to the cytoplasm. The catalysed reaction is tRNA(His) + L-histidine + ATP = L-histidyl-tRNA(His) + AMP + diphosphate + H(+). The polypeptide is Histidine--tRNA ligase (Francisella tularensis subsp. tularensis (strain SCHU S4 / Schu 4)).